The chain runs to 1148 residues: Autophagy-related protein 11 (1148 aa).

An AIM (Atg8-family-interacting motif) motif is present at residues 567-570 (FDDI). Over residues 699-710 (KAEASSDVEGNK) the composition is skewed to basic and acidic residues. Disordered regions lie at residues 699–727 (KAEASSDVEGNKTHVSGSEPMDEVSCVSN), 754–777 (PLDSSMLESQQNNEKGGKDSEAGE), and 784–803 (NSSTAESPQKSLDDNVATGR). 2 stretches are compositionally biased toward polar residues: residues 754–767 (PLDSSMLESQQNNE) and 784–793 (NSSTAESPQK). Coiled-coil stretches lie at residues 816 to 868 (ELRN…HLEN) and 956 to 996 (DKVS…VKTL). Thr-851 is subject to Phosphothreonine. The AIM (Atg8-family-interacting motif) motif lies at 1130–1133 (YFIV).

It belongs to the ATG11 family. As to quaternary structure, homodimer. Interacts with ATG8E, ATG13A and ATG101. Binds to ATG8E on autophagic vesicles.

The protein resides in the cytoplasmic vesicle. It localises to the autophagosome. In terms of biological role, accessory protein involved in autophagy. Acts as a scaffold protein of the ATG1-ATG13 complex for faithful delivery of autophagic vesicles to the vacuole. Involved in the stress-induced phosphorylation of ATG1A for turnover of ATG1-ATG13 complex and proper ATG1-ATG13 complex assembly or activity. Required for selective mitophagy. Required for senescence-induced breakdown of mitochondria-resident proteins and mitochondrial vesicles. Seems not essential for ATG8-mediated autophagy. This Arabidopsis thaliana (Mouse-ear cress) protein is Autophagy-related protein 11.